The following is a 127-amino-acid chain: Fluoride-specific ion channel FluC 1 (127 aa).

Helical transmembrane passes span 4 to 24, 35 to 55, 71 to 91, and 101 to 121; these read TLLA…LVSL, VGTL…LAFF, TGFC…VYLI, and GTIL…FILV. Gly-75 and Thr-78 together coordinate Na(+).

The protein belongs to the fluoride channel Fluc/FEX (TC 1.A.43) family.

The protein resides in the cell inner membrane. It catalyses the reaction fluoride(in) = fluoride(out). With respect to regulation, na(+) is not transported, but it plays an essential structural role and its presence is essential for fluoride channel function. Fluoride-specific ion channel. Important for reducing fluoride concentration in the cell, thus reducing its toxicity. The polypeptide is Fluoride-specific ion channel FluC 1 (Yersinia pestis).